Consider the following 113-residue polypeptide: Large ribosomal subunit protein P2 (113 aa).

A disordered region spans residues 60–113; the sequence is SKVSSLSAGAGPSGGAAAAGADAGAAEAEKEEEPQEEEADVNMGDIFGGDDEDY. Residues 74-85 are compositionally biased toward low complexity; that stretch reads GAAAAGADAGAA. The segment covering 88–99 has biased composition (acidic residues); the sequence is EKEEEPQEEEAD.

The protein belongs to the eukaryotic ribosomal protein P1/P2 family. P1 and P2 exist as dimers at the large ribosomal subunit. Phosphorylated.

Functionally, plays an important role in the elongation step of protein synthesis. The sequence is that of Large ribosomal subunit protein P2 from Euplotes raikovi.